The chain runs to 346 residues: Beta-hexosaminidase (346 aa).

Residues Asp62, Arg70, Arg134, and 164–165 contribute to the substrate site; that span reads KH. The Proton donor/acceptor role is filled by His177. Asp249 functions as the Nucleophile in the catalytic mechanism.

It belongs to the glycosyl hydrolase 3 family. NagZ subfamily.

It is found in the cytoplasm. The enzyme catalyses Hydrolysis of terminal non-reducing N-acetyl-D-hexosamine residues in N-acetyl-beta-D-hexosaminides.. It functions in the pathway cell wall biogenesis; peptidoglycan recycling. In terms of biological role, plays a role in peptidoglycan recycling by cleaving the terminal beta-1,4-linked N-acetylglucosamine (GlcNAc) from peptide-linked peptidoglycan fragments, giving rise to free GlcNAc, anhydro-N-acetylmuramic acid and anhydro-N-acetylmuramic acid-linked peptides. The sequence is that of Beta-hexosaminidase from Actinobacillus succinogenes (strain ATCC 55618 / DSM 22257 / CCUG 43843 / 130Z).